The following is an 88-amino-acid chain: Small ribosomal subunit protein bS16 (88 aa).

This sequence belongs to the bacterial ribosomal protein bS16 family.

In Geotalea daltonii (strain DSM 22248 / JCM 15807 / FRC-32) (Geobacter daltonii), this protein is Small ribosomal subunit protein bS16.